Reading from the N-terminus, the 704-residue chain is Mannan-binding lectin serine protease 1 (704 aa).

The signal sequence occupies residues 1–24; sequence MRFLSFRRLLLYHVLCLTLTEVSA. The 119-residue stretch at 25–143 folds into the CUB 1 domain; that stretch reads HTVELNEMFG…TGFDAHYMAV (119 aa). Residues 25 to 189 form a homodimerization region; the sequence is HTVELNEMFG…HTDNRTCRVE (165 aa). Residues 25–189 are interaction with MBL2; sequence HTVELNEMFG…HTDNRTCRVE (165 aa). Positions 25-283 are interaction with FCN2; the sequence is HTVELNEMFG…STQSHSIQIL (259 aa). Residues 25-305 are interaction with MBL1; it reads HTVELNEMFG…RLSYRAAGNE (281 aa). Asn54 carries N-linked (GlcNAc...) asparagine glycosylation. Ca(2+) contacts are provided by Glu73, Asp81, Asp126, Ser128, Asp144, Val145, and Glu147. A disulfide bridge connects residues Cys78 and Cys96. The region spanning 144–187 is the EGF-like; calcium-binding domain; that stretch reads DVDECKEREDEELSCDHYCHNYIGGYYCSCRFGYILHTDNRTCR. Intrachain disulfides connect Cys148–Cys162, Cys158–Cys171, Cys173–Cys186, and Cys190–Cys217. Residues Asn164, Tyr165, and Gly168 each contribute to the Ca(2+) site. Asn164 carries the (3R)-3-hydroxyasparagine modification. Residue Asn183 is glycosylated (N-linked (GlcNAc...) asparagine). The 113-residue stretch at 190 to 302 folds into the CUB 2 domain; the sequence is CSGNLFTQRT…RGWRLSYRAA (113 aa). Residues Glu240, Asp250, Asp287, and Ser289 each contribute to the Ca(2+) site. Cys247 and Cys265 are joined by a disulfide. 2 consecutive Sushi domains span residues 304-369 and 370-439; these read NECP…TCKI and VDCG…TCLP. 6 disulfides stabilise this stretch: Cys306-Cys354, Cys334-Cys367, Cys372-Cys419, Cys402-Cys437, Cys441-Cys577, and Cys480-Cys496. Residues Asn390 and Asn412 are each glycosylated (N-linked (GlcNAc...) asparagine). One can recognise a Peptidase S1 domain in the interval 454-701; sequence IFNGRPAQKG…NKDWIQRVTG (248 aa). His495 (charge relay system) is an active-site residue. A glycan (N-linked (GlcNAc...) asparagine) is linked at Leu538. Asp557 (charge relay system) is an active-site residue. A glycan (N-linked (GlcNAc...) asparagine) is linked at Glu604. Cystine bridges form between Cys619/Cys636 and Cys647/Cys677. Residue Ser651 is the Charge relay system of the active site.

It belongs to the peptidase S1 family. In terms of assembly, homodimer. Interacts with the oligomeric lectins MBL2, FCN2 and FCN3; triggers the lectin pathway of complement through activation of C3. Interacts with SERPING1. Interacts with COLEC11; probably triggers the lectin pathway of complement. In terms of processing, the iron and 2-oxoglutarate dependent 3-hydroxylation of aspartate and asparagine is (R) stereospecific within EGF domains. Post-translationally, N-glycosylated. Some N-linked glycan are of the complex-type. Autoproteolytic processing of the proenzyme produces the active enzyme composed on the heavy and the light chain held together by a disulfide bond. Isoform 1 but not isoform 2 is activated through autoproteolytic processing. In terms of tissue distribution, protein of the plasma which is primarily expressed by liver.

The protein resides in the secreted. With respect to regulation, inhibited by SERPING1 and A2M. In terms of biological role, functions in the lectin pathway of complement, which performs a key role in innate immunity by recognizing pathogens through patterns of sugar moieties and neutralizing them. The lectin pathway is triggered upon binding of mannan-binding lectin (MBL) and ficolins to sugar moieties which leads to activation of the associated proteases MASP1 and MASP2. Functions as an endopeptidase and may activate MASP2 or C2 or directly activate C3 the key component of complement reaction. Isoform 2 may have an inhibitory effect on the activation of the lectin pathway of complement or may cleave IGFBP5. Also plays a role in development. The protein is Mannan-binding lectin serine protease 1 (Masp1) of Rattus norvegicus (Rat).